Here is a 228-residue protein sequence, read N- to C-terminus: uncharacterized protein (228 aa).

Positions 1–16 are cleaved as a signal peptide; sequence MILLLLALISATTAFQ. A helical transmembrane segment spans residues 206 to 225; that stretch reads LFQTLFFVTLSFLVGSAFAL.

The protein to A.fulgidus AF_1225.

It is found in the membrane. This is an uncharacterized protein from Archaeoglobus fulgidus (strain ATCC 49558 / DSM 4304 / JCM 9628 / NBRC 100126 / VC-16).